A 213-amino-acid chain; its full sequence is ATP synthase peripheral stalk subunit OSCP, mitochondrial (213 aa).

Residues 1 to 23 constitute a mitochondrion transit peptide; that stretch reads MASQAVSGLSRQVRCFSTSVVRP. The SIFI-degron signature appears at 5–23; that stretch reads AVSGLSRQVRCFSTSVVRP. Residues K54, K60, K70, and K73 each carry the N6-acetyllysine modification. N6-succinyllysine is present on K90. K100, K158, and K162 each carry N6-acetyllysine; alternate. Residues K100, K158, and K162 each carry the N6-succinyllysine; alternate modification. 3 positions are modified to N6-acetyllysine: K172, K176, and K192. At K199 the chain carries N6-succinyllysine.

This sequence belongs to the ATPase delta chain family. In terms of assembly, component of the ATP synthase complex composed at least of ATP5F1A/subunit alpha, ATP5F1B/subunit beta, ATP5MC1/subunit c (homooctomer), MT-ATP6/subunit a, MT-ATP8/subunit 8, ATP5ME/subunit e, ATP5MF/subunit f, ATP5MG/subunit g, ATP5MK/subunit k, ATP5MJ/subunit j, ATP5F1C/subunit gamma, ATP5F1D/subunit delta, ATP5F1E/subunit epsilon, ATP5PF/subunit F6, ATP5PB/subunit b, ATP5PD/subunit d, ATP5PO/subunit OSCP. ATP synthase complex consists of a soluble F(1) head domain (subunits alpha(3) and beta(3)) - the catalytic core - and a membrane F(0) domain - the membrane proton channel (subunits c, a, 8, e, f, g, k and j). These two domains are linked by a central stalk (subunits gamma, delta, and epsilon) rotating inside the F1 region and a stationary peripheral stalk (subunits F6, b, d, and OSCP). Post-translationally, acetylation at Lys-162 decreases ATP production. Deacetylated by SIRT3. In terms of processing, in response to mitochondrial stress, the precursor protein is ubiquitinated by the SIFI complex in the cytoplasm before mitochondrial import, leading to its degradation. Within the SIFI complex, UBR4 initiates ubiquitin chain that are further elongated or branched by KCMF1.

It is found in the mitochondrion. The protein resides in the mitochondrion inner membrane. Subunit OSCP, of the mitochondrial membrane ATP synthase complex (F(1)F(0) ATP synthase or Complex V) that produces ATP from ADP in the presence of a proton gradient across the membrane which is generated by electron transport complexes of the respiratory chain. ATP synthase complex consist of a soluble F(1) head domain - the catalytic core - and a membrane F(1) domain - the membrane proton channel. These two domains are linked by a central stalk rotating inside the F(1) region and a stationary peripheral stalk. During catalysis, ATP synthesis in the catalytic domain of F(1) is coupled via a rotary mechanism of the central stalk subunits to proton translocation. In vivo, can only synthesize ATP although its ATP hydrolase activity can be activated artificially in vitro. Part of the complex F(0) domain. Part of the complex F(0) domain and the peripheric stalk, which acts as a stator to hold the catalytic alpha(3)beta(3) subcomplex and subunit a/ATP6 static relative to the rotary elements. The sequence is that of ATP synthase peripheral stalk subunit OSCP, mitochondrial from Sus scrofa (Pig).